Reading from the N-terminus, the 80-residue chain is Conotoxin Lt6.2 (80 aa).

Residues 1–24 (MKLTRVLIIAVLFLTAYQLTTVET) form the signal peptide. A propeptide spanning residues 25-47 (YSRGKWMHRALRSTGKNPKVTRE) is cleaved from the precursor. Intrachain disulfides connect Cys48-Cys62, Cys55-Cys66, and Cys61-Cys73.

This sequence belongs to the conotoxin O1 superfamily. In terms of tissue distribution, expressed by the venom duct.

It is found in the secreted. This Conus litteratus (Lettered cone) protein is Conotoxin Lt6.2.